Consider the following 864-residue polypeptide: Xylosyltransferase 2 (864 aa).

The Cytoplasmic portion of the chain corresponds to 1 to 15 (MVASARVQKLVRRYK). Residues 16-36 (LAIATALAILLLQGLVVWSFS) traverse the membrane as a helical; Signal-anchor for type II membrane protein segment. The Lumenal portion of the chain corresponds to 37–864 (GLEEDEPGEK…GPVKADGRLR (828 aa)). Disordered regions lie at residues 39–123 (EEDE…RQNL) and 136–158 (AGFP…DNSF). Over residues 53–65 (RPLDPGEGSKDTD) the composition is skewed to basic and acidic residues. Over residues 73 to 82 (SAGRRHGRWR) the composition is skewed to basic residues. Residue asparagine 122 is glycosylated (N-linked (GlcNAc...) asparagine). 4 disulfide bridges follow: cysteine 162–cysteine 190, cysteine 206–cysteine 448, cysteine 467–cysteine 480, and cysteine 469–cysteine 478. UDP-alpha-D-xylose-binding positions include valine 239, aspartate 267, and 296–298 (TIW). The N-linked (GlcNAc...) asparagine glycan is linked to asparagine 327. Position 400 to 401 (400 to 401 (DW)) interacts with UDP-alpha-D-xylose. Residues serine 481 and 504–505 (RK) each bind UDP-alpha-D-xylose. 2 disulfide bridges follow: cysteine 580–cysteine 832 and cysteine 825–cysteine 838. N-linked (GlcNAc...) asparagine glycosylation occurs at asparagine 682.

Belongs to the glycosyltransferase 14 family. XylT subfamily. Monomer. It depends on Mg(2+) as a cofactor. Mn(2+) is required as a cofactor. Post-translationally, contains disulfide bonds.

It localises to the golgi apparatus membrane. The protein localises to the secreted. The catalysed reaction is UDP-alpha-D-xylose + L-seryl-[protein] = 3-O-(beta-D-xylosyl)-L-seryl-[protein] + UDP + H(+). The protein operates within glycan metabolism; chondroitin sulfate biosynthesis. It participates in glycan metabolism; heparan sulfate biosynthesis. Catalyzes the first step in the biosynthesis of chondroitin sulfate, heparan sulfate and dermatan sulfate proteoglycans, such as DCN. Transfers D-xylose from UDP-D-xylose to specific serine residues of the core protein. This chain is Xylosyltransferase 2 (Xylt2), found in Rattus norvegicus (Rat).